The chain runs to 137 residues: uncharacterized protein (137 aa).

Residues 30–105 (SLLCVFTALR…IRFIQIPDKI (76 aa)) form the Sm domain.

This is an uncharacterized protein from Dictyostelium discoideum (Social amoeba).